The following is a 339-amino-acid chain: MTSLFFEYTFPLIIIALKVVAITVPLILCVAYLTYVERRVIGLMQLRRGPNVVGPFGLLQPIADAVKLLFKEPIIPTNSDRILFILAPMITFILSLIGWAVVPFAKGLVLADINVGVLYILAISSLSVYGIIIAGWASNSKYAFLGAIRSSAQMISYEVSMGLVIITVLLTTGTLNLSGIIEAQRTIPWWIDLMLLPMGVVFFISVLAETNRLPFDLPEAESELVAGYNVEYSSMGFALFFLGEYANMILVSAMTTTFFLGGYLPPFNISWLDCIPGFFWFAFKVGFLLFCFLWIRATLPRYRYDQLMRLGWKVLLPLTLFWVVLVSSVLMYTDHLPSV.

9 helical membrane passes run 10–30, 50–70, 82–102, 115–135, 161–181, 187–207, 235–255, 275–295, and 310–330; these read FPLIIIALKVVAITVPLILCV, PNVVGPFGLLQPIADAVKLLF, ILFILAPMITFILSLIGWAVV, VGVLYILAISSLSVYGIIIAG, MGLVIITVLLTTGTLNLSGII, IPWWIDLMLLPMGVVFFISVL, MGFALFFLGEYANMILVSAMT, IPGFFWFAFKVGFLLFCFLWI, and LGWKVLLPLTLFWVVLVSSVL.

It belongs to the complex I subunit 1 family. In terms of assembly, NDH-1 is composed of 14 different subunits. Subunits NuoA, H, J, K, L, M, N constitute the membrane sector of the complex.

It localises to the cell inner membrane. The catalysed reaction is a quinone + NADH + 5 H(+)(in) = a quinol + NAD(+) + 4 H(+)(out). In terms of biological role, NDH-1 shuttles electrons from NADH, via FMN and iron-sulfur (Fe-S) centers, to quinones in the respiratory chain. The immediate electron acceptor for the enzyme in this species is believed to be ubiquinone. Couples the redox reaction to proton translocation (for every two electrons transferred, four hydrogen ions are translocated across the cytoplasmic membrane), and thus conserves the redox energy in a proton gradient. This subunit may bind ubiquinone. In Rickettsia canadensis (strain McKiel), this protein is NADH-quinone oxidoreductase subunit H.